The chain runs to 326 residues: Eukaryotic translation initiation factor 3 subunit I (326 aa).

WD repeat units lie at residues 8–47 (GHER…RLGT), 50–89 (GHQG…VIAS), 145–184 (MTES…KVVD), 188–227 (DHSA…CLKT), and 285–326 (GHFG…NIFE).

It belongs to the eIF-3 subunit I family. In terms of assembly, component of the eukaryotic translation initiation factor 3 (eIF-3) complex. The eIF-3 complex interacts with pix.

It localises to the cytoplasm. In terms of biological role, component of the eukaryotic translation initiation factor 3 (eIF-3) complex, which is involved in protein synthesis of a specialized repertoire of mRNAs and, together with other initiation factors, stimulates binding of mRNA and methionyl-tRNAi to the 40S ribosome. The eIF-3 complex specifically targets and initiates translation of a subset of mRNAs involved in cell proliferation. This chain is Eukaryotic translation initiation factor 3 subunit I, found in Drosophila erecta (Fruit fly).